Reading from the N-terminus, the 531-residue chain is UDP-glucuronosyltransferase 1A3 (531 aa).

The first 25 residues, 1-25, serve as a signal peptide directing secretion; sequence MGIQGFLQKLSGLLLLLCALPWAEG. Residues N116, N139, N293, and N431 are each glycosylated (N-linked (GlcNAc...) asparagine). A helical membrane pass occupies residues 489 to 505; sequence VIGFLLAIVLTVVFIVY.

The protein belongs to the UDP-glycosyltransferase family. As to quaternary structure, homodimers. Homooligomer. Interacts with UGT1A1, UGT1A4, UGT1A6, UGT1A7, UGT1A8, UGT1A9 and UGT1A10 to form heterodimers.

Its subcellular location is the endoplasmic reticulum membrane. It catalyses the reaction glucuronate acceptor + UDP-alpha-D-glucuronate = acceptor beta-D-glucuronoside + UDP + H(+). It carries out the reaction 17beta-estradiol + UDP-alpha-D-glucuronate = 17beta-estradiol 3-O-(beta-D-glucuronate) + UDP + H(+). The catalysed reaction is 17beta-estradiol + UDP-alpha-D-glucuronate = 17beta-estradiol 17-O-(beta-D-glucuronate) + UDP + H(+). The enzyme catalyses 17alpha-estradiol + UDP-alpha-D-glucuronate = 17alpha-estradiol 3-O-(beta-D-glucuronate) + UDP + H(+). It catalyses the reaction estrone + UDP-alpha-D-glucuronate = estrone 3-O-(beta-D-glucuronate) + UDP + H(+). It carries out the reaction chenodeoxycholate + UDP-alpha-D-glucuronate = chenodeoxycholoyl-24-O-(beta-D-glucuronate) + UDP. The catalysed reaction is deoxycholate + UDP-alpha-D-glucuronate = deoxycholoyl-24-O-(beta-D-glucuronate) + UDP. The enzyme catalyses lithocholate + UDP-alpha-D-glucuronate = lithocholoyl-24-O-(beta-D-glucuronate) + UDP. It catalyses the reaction hyodeoxycholate + UDP-alpha-D-glucuronate = hyodeoxycholoyl-24-O-(beta-D-glucuronate) + UDP. It carries out the reaction hyocholate + UDP-alpha-D-glucuronate = hyocholoyl-24-O-(beta-D-glucuronate) + UDP. The catalysed reaction is calcidiol + UDP-alpha-D-glucuronate = calcidiol 25-O-(beta-D-glucuronide) + UDP + H(+). The enzyme catalyses losartan + UDP-alpha-D-glucuronate = losartan-2-N-beta-D-glucuronide + UDP. It catalyses the reaction candesartan + UDP-alpha-D-glucuronate = candesartan-2-N-beta-D-glucuronide + UDP. It carries out the reaction zolasartan + UDP-alpha-D-glucuronate = zolarsartan-2-N-beta-D-glucuronide + UDP. The catalysed reaction is (E)-ferulate + UDP-alpha-D-glucuronate = (E)-4-O-(beta-D-glucuronosyl)-ferulate + UDP + H(+). The enzyme catalyses (E)-ferulate + UDP-alpha-D-glucuronate = (E)-ferulic acid beta-D-glucuronate ester + UDP. Functionally, UDP-glucuronosyltransferase (UGT) that catalyzes phase II biotransformation reactions in which lipophilic substrates are conjugated with glucuronic acid to increase the metabolite's water solubility, thereby facilitating excretion into either the urine or bile. Essential for the elimination and detoxification of drugs, xenobiotics and endogenous compounds. Catalyzes the glucuronidation of endogenous estrogen hormones such as estradiol and estrone. Contributes to bile acid (BA) detoxification by catalyzing the glucuronidation of BA substrates, which are natural detergents for dietary lipids absorption. Involved in the glucuronidation of calcidiol, which is the major circulating form of vitamin D3, essential for the regulation of calcium and phosphate homeostasis. Involved in the glucuronidation of the phytochemical ferulic acid at the phenolic or the carboxylic acid group. Involved in the glucuronidation of the AGTR1 angiotensin receptor antagonists losartan, candesartan and zolarsartan, which can inhibit the effect of angiotensin II. This Rattus norvegicus (Rat) protein is UDP-glucuronosyltransferase 1A3.